Reading from the N-terminus, the 436-residue chain is C4-dicarboxylate transport protein 2 (436 aa).

9 consecutive transmembrane segments (helical) span residues 14–34 (VLVA…TAVA), 45–65 (LIKM…IAGM), 77–97 (MALL…LVVV), 142–162 (VVGA…VLFG), 198–218 (PIGA…GSLV), 223–243 (LMLC…GGIA), 290–310 (VVGL…SIYL), 331–351 (ITLL…TGSG), and 353–373 (IVLA…LALI). Positions 414–436 (ELAGEGNASSPASDIPVGGREAV) are disordered.

This sequence belongs to the dicarboxylate/amino acid:cation symporter (DAACS) (TC 2.A.23) family.

The protein localises to the cell inner membrane. In terms of biological role, responsible for the transport of dicarboxylates such as succinate, fumarate, and malate from the periplasm across the membrane. The sequence is that of C4-dicarboxylate transport protein 2 from Pseudomonas paraeruginosa (strain DSM 24068 / PA7) (Pseudomonas aeruginosa (strain PA7)).